The sequence spans 584 residues: Arginine--tRNA ligase (584 aa).

Positions Pro-127–His-137 match the 'HIGH' region motif.

Belongs to the class-I aminoacyl-tRNA synthetase family. Monomer.

The protein localises to the cytoplasm. The enzyme catalyses tRNA(Arg) + L-arginine + ATP = L-arginyl-tRNA(Arg) + AMP + diphosphate. The protein is Arginine--tRNA ligase of Borrelia hermsii (strain HS1 / DAH).